The sequence spans 287 residues: Large ribosomal subunit protein uL2 (287 aa).

The interval 221 to 287 is disordered; that stretch reads RGSVMNPCDH…SKRSRGGRDS (67 aa). Residues 271-287 show a composition bias toward basic residues; sequence LRKRRKTSKRSRGGRDS.

The protein belongs to the universal ribosomal protein uL2 family. As to quaternary structure, part of the 50S ribosomal subunit. Forms a bridge to the 30S subunit in the 70S ribosome.

Functionally, one of the primary rRNA binding proteins. Required for association of the 30S and 50S subunits to form the 70S ribosome, for tRNA binding and peptide bond formation. It has been suggested to have peptidyltransferase activity; this is somewhat controversial. Makes several contacts with the 16S rRNA in the 70S ribosome. This is Large ribosomal subunit protein uL2 from Synechococcus sp. (strain CC9902).